A 795-amino-acid polypeptide reads, in one-letter code: MKFSEQWLREWVNPDISSHELSEQLSMAGLEVDAVEPVADEFHTVVVGEVIECGPHPDADKLQVTKVNVGEDEPVDIVCGASNCRLGIKVAVAKVGAVLPGDFKIKKAKLRGQPSNGMLCSFKELGLIDEHDGIIELPADAPVGEDYRKYLQLDDNSIDIDLTPNRGDCLSIRGIAREVGVLNRLDVTVPESNEVTASIEDTLSISLSAAEQCPRYLGRVIKGVDLTRPTPVWMTEKLRRSGIRSIDPVVDVTNYVLLELGHPMHAFDLDSLEGNIDVRLAKPKEQLTLLDEQLVELDEDTLVIADEKKALAMAGVYGGKNSGVTESSKNIFLESAFFAPDAILGKARRYGLHTDASHRYERGVDPQLQRTAMERATELLLAICGGEAGPVTEAVAEAFLPKRDGITLRACRLAKVLGVSIANDNVTEILERLGFDVSFDGEQWQVGIPSYRFDLSIEEDLIEEVARVYGYNSIQAAPPAAQLRMTERKESQLSTHQLVDAMVSRGYQEAITYSFVDPKHQALMFDETAALTLPHPISVDMSSMRVSLWPGLVGAVAHNQKRQQSVLAFVETGLRFIPDESAENGVRQEAVISGIRSGKAHSEHWSEGDRPVDFYDVKGDVEALLAQTGNAAAFRFVASQNPALHPGQSAAIYRGSEKVGDIGALHPKFDKALGLNQRTFVFELALSVVTERPLPQAKPVSRYPSIRRDLAVVVDKDLAAGELIAAMENVGVKQLVDLNLFDVYIGDGVAEGKQSLALSVTLQDSDKTLEEAEVTELMTKFIETLKSEFNATLRD.

The region spanning A39–R148 is the tRNA-binding domain. A B5 domain is found at P401–A476. Residues D454, D460, E463, and E464 each contribute to the Mg(2+) site. An FDX-ACB domain is found at S701 to R794.

It belongs to the phenylalanyl-tRNA synthetase beta subunit family. Type 1 subfamily. In terms of assembly, tetramer of two alpha and two beta subunits. Mg(2+) is required as a cofactor.

It is found in the cytoplasm. It carries out the reaction tRNA(Phe) + L-phenylalanine + ATP = L-phenylalanyl-tRNA(Phe) + AMP + diphosphate + H(+). The protein is Phenylalanine--tRNA ligase beta subunit of Idiomarina loihiensis (strain ATCC BAA-735 / DSM 15497 / L2-TR).